An 833-amino-acid polypeptide reads, in one-letter code: Leucine--tRNA ligase (833 aa).

The 'HIGH' region motif lies at 41 to 52; it reads PYPSGAGLHVGH. A 'KMSKS' region motif is present at residues 610-614; sequence KMSKS. Lys613 contacts ATP.

It belongs to the class-I aminoacyl-tRNA synthetase family.

It localises to the cytoplasm. The enzyme catalyses tRNA(Leu) + L-leucine + ATP = L-leucyl-tRNA(Leu) + AMP + diphosphate. This Streptococcus sanguinis (strain SK36) protein is Leucine--tRNA ligase.